Here is a 302-residue protein sequence, read N- to C-terminus: Deoxyribonuclease-1-like 1 (302 aa).

The N-terminal stretch at 1 to 18 is a signal peptide; that stretch reads MHYPTALLFLILVNGAQA. Active-site residues include Glu97 and His148. Cys187 and Cys224 form a disulfide bridge. N-linked (GlcNAc...) asparagine glycosylation is present at Asn261.

It belongs to the DNase I family.

Its subcellular location is the endoplasmic reticulum. The chain is Deoxyribonuclease-1-like 1 (DNASE1L1) from Chlorocebus aethiops (Green monkey).